The sequence spans 86 residues: Small ribosomal subunit protein uS15 (86 aa).

Residues 1 to 10 (MSIDTQSIIE) show a composition bias toward polar residues. A disordered region spans residues 1 to 21 (MSIDTQSIIENNKRSAHDTGS).

This sequence belongs to the universal ribosomal protein uS15 family. In terms of assembly, part of the 30S ribosomal subunit. Forms a bridge to the 50S subunit in the 70S ribosome, contacting the 23S rRNA.

In terms of biological role, one of the primary rRNA binding proteins, it binds directly to 16S rRNA where it helps nucleate assembly of the platform of the 30S subunit by binding and bridging several RNA helices of the 16S rRNA. Its function is as follows. Forms an intersubunit bridge (bridge B4) with the 23S rRNA of the 50S subunit in the ribosome. The chain is Small ribosomal subunit protein uS15 from Xylella fastidiosa (strain M23).